The chain runs to 690 residues: Elongation factor G (690 aa).

One can recognise a tr-type G domain in the interval 8-283; it reads EDYRNFGIMA…AVVDYLPSPV (276 aa). Residues 17 to 24, 81 to 85, and 135 to 138 each bind GTP; these read AHIDAGKT, DTPGH, and NKMD.

Belongs to the TRAFAC class translation factor GTPase superfamily. Classic translation factor GTPase family. EF-G/EF-2 subfamily.

It localises to the cytoplasm. Its function is as follows. Catalyzes the GTP-dependent ribosomal translocation step during translation elongation. During this step, the ribosome changes from the pre-translocational (PRE) to the post-translocational (POST) state as the newly formed A-site-bound peptidyl-tRNA and P-site-bound deacylated tRNA move to the P and E sites, respectively. Catalyzes the coordinated movement of the two tRNA molecules, the mRNA and conformational changes in the ribosome. The chain is Elongation factor G from Rhodopseudomonas palustris (strain BisB18).